Consider the following 190-residue polypeptide: Probable DNA replication complex GINS protein PSF2 (190 aa).

The protein belongs to the GINS2/PSF2 family. In terms of assembly, component of the GINS complex which is a heterotetramer of gins1, gins2, gins3 and gins4.

The protein localises to the nucleus. Its function is as follows. The GINS complex plays an essential role in the initiation of DNA replication. This chain is Probable DNA replication complex GINS protein PSF2, found in Brugia malayi (Filarial nematode worm).